A 142-amino-acid chain; its full sequence is Large ribosomal subunit protein bL17 (142 aa).

It belongs to the bacterial ribosomal protein bL17 family. Part of the 50S ribosomal subunit. Contacts protein L32.

The polypeptide is Large ribosomal subunit protein bL17 (Brucella canis (strain ATCC 23365 / NCTC 10854 / RM-666)).